Reading from the N-terminus, the 167-residue chain is Large ribosomal subunit protein uL10 (167 aa).

Belongs to the universal ribosomal protein uL10 family. In terms of assembly, part of the ribosomal stalk of the 50S ribosomal subunit. The N-terminus interacts with L11 and the large rRNA to form the base of the stalk. The C-terminus forms an elongated spine to which L12 dimers bind in a sequential fashion forming a multimeric L10(L12)X complex.

Functionally, forms part of the ribosomal stalk, playing a central role in the interaction of the ribosome with GTP-bound translation factors. This is Large ribosomal subunit protein uL10 from Alkaliphilus oremlandii (strain OhILAs) (Clostridium oremlandii (strain OhILAs)).